The primary structure comprises 389 residues: Indole-3-acetate monooxygenase (389 aa).

It belongs to the HpaH/HsaA monooxygenase family.

It catalyses the reaction (indol-3-yl)acetate + NADH + O2 + H(+) = 2-hydroxy-(1H-indol-3-yl)acetate + NAD(+) + H2O. It carries out the reaction indole + NADH + O2 + H(+) = indoxyl + NAD(+) + H2O. In terms of biological role, involved in the degradation of the plant hormone indole-3-acetic acid (IAA). Catalyzes the first step of the pathway, the conversion of IAA to 2-hydroxy-IAA (2-OH-IAA). Can also convert indole to indoxyl, which spontaneously dimerizes in the presence of oxygen to form the blue pigment indigo. The chain is Indole-3-acetate monooxygenase from Pseudomonas putida (Arthrobacter siderocapsulatus).